The primary structure comprises 30 residues: Cyclotide cter-O (30 aa).

The cyclopeptide (Gly-Asn) cross-link spans 1 to 30 (GIPCGESCVFIPCITGIAGCSCKSKVCYRN). Cystine bridges form between Cys-4–Cys-20, Cys-8–Cys-22, and Cys-13–Cys-27.

Post-translationally, this is a cyclic peptide.

The protein localises to the secreted. Its function is as follows. Probably participates in a plant defense mechanism. This is Cyclotide cter-O from Clitoria ternatea (Butterfly pea).